Here is a 581-residue protein sequence, read N- to C-terminus: DNA polymerase alpha subunit B (581 aa).

The protein belongs to the DNA polymerase alpha subunit B family. In terms of assembly, DNA polymerase alpha:primase is a four subunit enzyme complex, which is assembled throughout the cell cycle, and consists of the two DNA polymerase subunits A and B, and the DNA primase large and small subunits. Subunit B binds to subunit A.

It is found in the nucleus. In terms of biological role, may play an essential role at the early stage of chromosomal DNA replication by coupling the polymerase alpha/primase complex to the cellular replication machinery. Required for the distribution of pie-1 in cell divsion. The polypeptide is DNA polymerase alpha subunit B (div-1) (Caenorhabditis elegans).